Here is a 230-residue protein sequence, read N- to C-terminus: Potassium/proton antiporter CemA (230 aa).

4 helical membrane-spanning segments follow: residues 7 to 27, 106 to 126, 145 to 165, and 181 to 201; these read LPSL…SSSF, IILH…SFFL, LNDS…VGFH, and FGWA…PVIL.

The protein belongs to the CemA family.

Its subcellular location is the plastid. It localises to the chloroplast inner membrane. It catalyses the reaction K(+)(in) + H(+)(out) = K(+)(out) + H(+)(in). Contributes to K(+)/H(+) antiport activity by supporting proton efflux to control proton extrusion and homeostasis in chloroplasts in a light-dependent manner to modulate photosynthesis. Prevents excessive induction of non-photochemical quenching (NPQ) under continuous-light conditions. Indirectly promotes efficient inorganic carbon uptake into chloroplasts. This Hordeum vulgare (Barley) protein is Potassium/proton antiporter CemA.